Reading from the N-terminus, the 386-residue chain is Succinate--CoA ligase [ADP-forming] subunit beta (386 aa).

Positions 9 to 244 constitute an ATP-grasp domain; the sequence is KAVLRSYGVS…LDEEDSKEIE (236 aa). Residues Lys46, 53–55, Glu99, Cys102, and Glu107 each bind ATP; that span reads GRG. The Mg(2+) site is built by Asn199 and Asp213. Substrate is bound by residues Asn264 and 321–323; that span reads GIM.

This sequence belongs to the succinate/malate CoA ligase beta subunit family. As to quaternary structure, heterotetramer of two alpha and two beta subunits. Mg(2+) serves as cofactor.

The enzyme catalyses succinate + ATP + CoA = succinyl-CoA + ADP + phosphate. It carries out the reaction GTP + succinate + CoA = succinyl-CoA + GDP + phosphate. It functions in the pathway carbohydrate metabolism; tricarboxylic acid cycle; succinate from succinyl-CoA (ligase route): step 1/1. Succinyl-CoA synthetase functions in the citric acid cycle (TCA), coupling the hydrolysis of succinyl-CoA to the synthesis of either ATP or GTP and thus represents the only step of substrate-level phosphorylation in the TCA. The beta subunit provides nucleotide specificity of the enzyme and binds the substrate succinate, while the binding sites for coenzyme A and phosphate are found in the alpha subunit. The polypeptide is Succinate--CoA ligase [ADP-forming] subunit beta (Bacillus cereus (strain G9842)).